The chain runs to 150 residues: UPF0178 protein AZOSEA36080 (150 aa).

Belongs to the UPF0178 family.

The protein is UPF0178 protein AZOSEA36080 of Aromatoleum aromaticum (strain DSM 19018 / LMG 30748 / EbN1) (Azoarcus sp. (strain EbN1)).